A 380-amino-acid chain; its full sequence is MAKKDYYDTLGVPKNASDDDIKKAYRKLAMKHHPDRNQGDKSKVSEEKFKEAKEAYEVLSDENKRMAYDQYGHAGVDPNMRGGGPGAEGFGGFAEAFGDIFGDVFGGQRGGQQRGGRQVYRGGDLSYAMEITLEEAAHGKEAQIRIPSWDDCNTCHGSGAKPGTKVVTCTTCHGHGVVQMRQGFFSVQQTCPQCKGTGKLIPEPCVACHGVGKTKNNKTLEVKIPAGIDDGMRIRSTGNGEPGTNGGPPGDLYIEIRIKKHEIFERDGDDLHCAVPISFTTAALGGEIEVPTLAGKAAIDIPEGTQAAKQFRLRGKGIKGVRSSYPGDLYCHITVETPVKLTEHQRKLLKELDESLKKGGARHSPSEEGWADKLKSFFSA.

Residues 1–48 (MAKKDYYDTLGVPKNASDDDIKKAYRKLAMKHHPDRNQGDKSKVSEEK) are disordered. In terms of domain architecture, J spans 5-72 (DYYDTLGVPK…NKRMAYDQYG (68 aa)). The span at 24–34 (AYRKLAMKHHP) shows a compositional bias: basic residues. Residues 35–48 (DRNQGDKSKVSEEK) are compositionally biased toward basic and acidic residues. The segment at 139 to 217 (GKEAQIRIPS…CHGVGKTKNN (79 aa)) adopts a CR-type zinc-finger fold. 8 residues coordinate Zn(2+): C152, C155, C169, C172, C191, C194, C205, and C208. 4 CXXCXGXG motif repeats span residues 152–159 (CNTCHGSG), 169–176 (CTTCHGHG), 191–198 (CPQCKGTG), and 205–212 (CVACHGVG). Residues 357–380 (KKGGARHSPSEEGWADKLKSFFSA) form a disordered region. The segment covering 364-380 (SPSEEGWADKLKSFFSA) has biased composition (basic and acidic residues).

This sequence belongs to the DnaJ family. In terms of assembly, homodimer. Requires Zn(2+) as cofactor.

The protein localises to the cytoplasm. Its function is as follows. Participates actively in the response to hyperosmotic and heat shock by preventing the aggregation of stress-denatured proteins and by disaggregating proteins, also in an autonomous, DnaK-independent fashion. Unfolded proteins bind initially to DnaJ; upon interaction with the DnaJ-bound protein, DnaK hydrolyzes its bound ATP, resulting in the formation of a stable complex. GrpE releases ADP from DnaK; ATP binding to DnaK triggers the release of the substrate protein, thus completing the reaction cycle. Several rounds of ATP-dependent interactions between DnaJ, DnaK and GrpE are required for fully efficient folding. Also involved, together with DnaK and GrpE, in the DNA replication of plasmids through activation of initiation proteins. This is Chaperone protein DnaJ from Polaromonas sp. (strain JS666 / ATCC BAA-500).